The following is a 457-amino-acid chain: Argininosuccinate lyase (457 aa).

It belongs to the lyase 1 family. Argininosuccinate lyase subfamily.

The protein localises to the cytoplasm. It catalyses the reaction 2-(N(omega)-L-arginino)succinate = fumarate + L-arginine. Its pathway is amino-acid biosynthesis; L-arginine biosynthesis; L-arginine from L-ornithine and carbamoyl phosphate: step 3/3. This chain is Argininosuccinate lyase, found in Klebsiella pneumoniae subsp. pneumoniae (strain ATCC 700721 / MGH 78578).